The following is a 391-amino-acid chain: MNLHEFQAKHLFADYDIPIPQGYVARSSGEAVEAAGRLGGSVWVVKAQVHAGGRGKAGGVKVLKTKEEVEEFTDSLLGSRLVTHQTDAKGQPIHAVLVEQGLDIARELYLGALVDRASKRVTFMGSAAGGMDIEEVAASTPEKILTLAVDPAAGFQAYQGRKMAFALGLEGKQIGQLVKIMKSLYRIFEEKDLSMIEINPLIVTGDGQLLALDAKVNVDDNAVEIGRQPQIADMRDITQEDEAEVQAAEHNLNYITLDGNIGCMVNGAGLAMATMDVVNLHGGSPANFLDVGGGTTTERVTAAFKLILSSDTVEGILVNIFGGIVRCDVIAEGIIAAVKEVGVDVPVVVRLEGTNVEQGKQMLADSGMDLIPADDLTDAAKKVVAAVGKAA.

An ATP-grasp domain is found at 9-246; it reads KHLFADYDIP…ITQEDEAEVQ (238 aa). ATP contacts are provided by residues lysine 46, 53–55, glutamate 99, leucine 102, and glutamate 107; that span reads GRG. Mg(2+)-binding residues include asparagine 199 and aspartate 213. Residues asparagine 266 and 323-325 each bind substrate; that span reads GIV.

It belongs to the succinate/malate CoA ligase beta subunit family. In terms of assembly, heterotetramer of two alpha and two beta subunits. Mg(2+) serves as cofactor.

It catalyses the reaction succinate + ATP + CoA = succinyl-CoA + ADP + phosphate. It carries out the reaction GTP + succinate + CoA = succinyl-CoA + GDP + phosphate. The protein operates within carbohydrate metabolism; tricarboxylic acid cycle; succinate from succinyl-CoA (ligase route): step 1/1. Functionally, succinyl-CoA synthetase functions in the citric acid cycle (TCA), coupling the hydrolysis of succinyl-CoA to the synthesis of either ATP or GTP and thus represents the only step of substrate-level phosphorylation in the TCA. The beta subunit provides nucleotide specificity of the enzyme and binds the substrate succinate, while the binding sites for coenzyme A and phosphate are found in the alpha subunit. The polypeptide is Succinate--CoA ligase [ADP-forming] subunit beta (Alkalilimnicola ehrlichii (strain ATCC BAA-1101 / DSM 17681 / MLHE-1)).